Consider the following 201-residue polypeptide: Holliday junction resolvase RecU (201 aa).

4 residues coordinate Mg(2+): Thr87, Asp89, Glu102, and Gln121.

It belongs to the RecU family. Mg(2+) is required as a cofactor.

It localises to the cytoplasm. The catalysed reaction is Endonucleolytic cleavage at a junction such as a reciprocal single-stranded crossover between two homologous DNA duplexes (Holliday junction).. Functionally, endonuclease that resolves Holliday junction intermediates in genetic recombination. Cleaves mobile four-strand junctions by introducing symmetrical nicks in paired strands. Promotes annealing of linear ssDNA with homologous dsDNA. Required for DNA repair, homologous recombination and chromosome segregation. This Listeria welshimeri serovar 6b (strain ATCC 35897 / DSM 20650 / CCUG 15529 / CIP 8149 / NCTC 11857 / SLCC 5334 / V8) protein is Holliday junction resolvase RecU.